The primary structure comprises 397 residues: Phosphoglycerate kinase (397 aa).

Substrate is bound by residues 21-23 (DFN), arginine 36, 59-62 (HLGR), arginine 118, and arginine 151. Residues lysine 202, glycine 293, glutamate 324, and 353 to 356 (GGDS) contribute to the ATP site.

Belongs to the phosphoglycerate kinase family. Monomer.

The protein resides in the cytoplasm. It carries out the reaction (2R)-3-phosphoglycerate + ATP = (2R)-3-phospho-glyceroyl phosphate + ADP. It functions in the pathway carbohydrate degradation; glycolysis; pyruvate from D-glyceraldehyde 3-phosphate: step 2/5. This Chloroherpeton thalassium (strain ATCC 35110 / GB-78) protein is Phosphoglycerate kinase.